A 120-amino-acid polypeptide reads, in one-letter code: uncharacterized protein (120 aa).

Residues 79–120 form a disordered region; that stretch reads TGNEIPPEPEQEVVASPVTEQKKAEPSAPPKGSKKKKRGKKK. Basic residues predominate over residues 110–120; that stretch reads GSKKKKRGKKK.

This is an uncharacterized protein from Schizosaccharomyces pombe (strain 972 / ATCC 24843) (Fission yeast).